We begin with the raw amino-acid sequence, 325 residues long: ATP phosphoribosyltransferase (325 aa).

This sequence belongs to the ATP phosphoribosyltransferase family. Long subfamily. It depends on Mg(2+) as a cofactor.

It is found in the cytoplasm. The enzyme catalyses 1-(5-phospho-beta-D-ribosyl)-ATP + diphosphate = 5-phospho-alpha-D-ribose 1-diphosphate + ATP. Its pathway is amino-acid biosynthesis; L-histidine biosynthesis; L-histidine from 5-phospho-alpha-D-ribose 1-diphosphate: step 1/9. With respect to regulation, feedback inhibited by histidine. Functionally, catalyzes the condensation of ATP and 5-phosphoribose 1-diphosphate to form N'-(5'-phosphoribosyl)-ATP (PR-ATP). Has a crucial role in the pathway because the rate of histidine biosynthesis seems to be controlled primarily by regulation of HisG enzymatic activity. This is ATP phosphoribosyltransferase from Rhodopseudomonas palustris (strain HaA2).